A 492-amino-acid chain; its full sequence is Probable malate:quinone oxidoreductase 1 (492 aa).

This sequence belongs to the MQO family. FAD serves as cofactor.

The catalysed reaction is (S)-malate + a quinone = a quinol + oxaloacetate. It participates in carbohydrate metabolism; tricarboxylic acid cycle; oxaloacetate from (S)-malate (quinone route): step 1/1. The protein is Probable malate:quinone oxidoreductase 1 of Staphylococcus aureus (strain MW2).